The primary structure comprises 245 residues: Dof zinc finger protein DOF3.2 (245 aa).

Residues 15 to 26 are compositionally biased toward polar residues; it reads SCSTQDYQNQKK. The disordered stretch occupies residues 15–41; sequence SCSTQDYQNQKKPLSATRPAPPEQSLR. Residues 40-94 form a Dof-type zinc finger; it reads LRCPRCDSTNTKFCYYNNYSLSQPRYFCKSCRRYWTKGGILRNIPIGGAYRKHKR. 4 residues coordinate Zn(2+): C42, C45, C67, and C70. The interval 91-118 is disordered; sequence KHKRSSSATKSLRTTPEPTMTHDGKSFP. The segment covering 96-108 has biased composition (polar residues); that stretch reads SSATKSLRTTPEP.

As to quaternary structure, interacts with TCP14. As to expression, the PEAR proteins (e.g. DOF2.4, DOF5.1, DOF3.2, DOF1.1, DOF5.6 and DOF5.3) form a short-range concentration gradient that peaks at protophloem sieve elements (PSE).

Its subcellular location is the nucleus. In terms of biological role, transcription factor that negatively affects seed germination and opposes TCP14 function in the regulation of a specific set of abscisic acid-related genes. The PEAR proteins (e.g. DOF2.4, DOF5.1, DOF3.2, DOF1.1, DOF5.6 and DOF5.3) activate gene expression that promotes radial growth of protophloem sieve elements. The protein is Dof zinc finger protein DOF3.2 of Arabidopsis thaliana (Mouse-ear cress).